We begin with the raw amino-acid sequence, 407 residues long: Peptidase T (407 aa).

H77 is a binding site for Zn(2+). D79 is a catalytic residue. Residue D138 coordinates Zn(2+). Catalysis depends on E172, which acts as the Proton acceptor. E173, D195, and H377 together coordinate Zn(2+).

The protein belongs to the peptidase M20B family. Zn(2+) is required as a cofactor.

It localises to the cytoplasm. The catalysed reaction is Release of the N-terminal residue from a tripeptide.. Functionally, cleaves the N-terminal amino acid of tripeptides. The chain is Peptidase T from Aeromonas salmonicida (strain A449).